Reading from the N-terminus, the 1643-residue chain is Lysine-specific demethylase 6B (1643 aa).

Disordered stretches follow at residues 52 to 88, 190 to 680, 704 to 807, and 822 to 1096; these read GQPP…PLHG, AKRG…PLED, ESIR…LKSL, and GAAV…RSLS. 2 stretches are compositionally biased toward low complexity: residues 63–74 and 212–223; these read SHGSSSGHPSKP and AALSGPSGEEGL. Position 224 is a phosphoserine (S224). The span at 242-266 shows a compositional bias: pro residues; that stretch reads PGLPLPPPPLPPPPPPPPPPPPPLP. Residues 291–307 show a composition bias toward basic and acidic residues; that stretch reads GPERKGSAPPERQEQRH. Residues 332–342 show a composition bias toward pro residues; it reads AAPPGPGPRPP. A compositionally biased stretch (basic and acidic residues) spans 359–370; it reads DLRESRVQRSRM. Residues 394–412 are compositionally biased toward low complexity; sequence PGTTTSSSSSSSSNTGLRG. Over residues 460 to 484 the composition is skewed to pro residues; the sequence is SLPPGPSSPPPPPCPRLLRPPPPPA. Positions 550 to 569 are enriched in low complexity; it reads TTSSSNSNSGSHSSSPAGPV. Pro residues-rich tracts occupy residues 584 to 600 and 641 to 658; these read LPRP…PPLV and GPGP…PVPP. The span at 704–714 shows a compositional bias: basic and acidic residues; it reads ESIRKEEEQQQ. A compositionally biased stretch (low complexity) spans 740 to 764; the sequence is TAPTTTAPAVAVTTTTTTTTTTTAT. A compositionally biased stretch (pro residues) spans 772–800; it reads PPALPPPPPLAKFPPPSQPQPPPPPPPSP. Positions 843–877 are enriched in low complexity; the sequence is SGATALPPTSAAPSAQGSPQPSASSSSQFSTSGGP. Residues 889–904 show a composition bias toward pro residues; the sequence is VPGPMTPTQPPPPLSL. Residues 916–929 are compositionally biased toward basic and acidic residues; the sequence is EISRACETLVERVG. Residues 972 to 989 show a composition bias toward basic residues; the sequence is CKRRQKEHQKEHRRHRRA. Residues 990 to 1003 are compositionally biased toward basic and acidic residues; sequence CKDSVGRRPREGRA. Over residues 1004–1016 the composition is skewed to basic residues; the sequence is KAKAKVPKEKSRR. Residues 1047–1067 show a composition bias toward pro residues; sequence PTAPAPPSAPAPSAQPTPPSA. K1109 is covalently cross-linked (Glycyl lysine isopeptide (Lys-Gly) (interchain with G-Cter in SUMO2)). The tract at residues 1288-1325 is disordered; that stretch reads FQESLQEEKESEDEESEEPDSTTGTPPSSAPDPKNHHI. The segment covering 1296–1307 has biased composition (acidic residues); sequence KESEDEESEEPD. In terms of domain architecture, JmjC spans 1339-1502; that stretch reads RWKPQLQELL…YQLALERYEW (164 aa). H1390, E1392, and H1470 together coordinate Fe cation. The Zn(2+) site is built by C1575, C1578, C1602, and C1605.

This sequence belongs to the UTX family. In terms of assembly, interacts with TLE1. Component of the MLL4 complex, at least composed of KMT2B/MLL4, ASH2L, RBBP5, WDR5, and KDM6B. Interacts with TBX21, SMARCA4, SMARCC1 and SMARCC2. L-ascorbate is required as a cofactor. Requires Fe(2+) as cofactor.

It is found in the nucleus. The catalysed reaction is N(6),N(6),N(6)-trimethyl-L-lysyl(27)-[histone H3] + 2 2-oxoglutarate + 2 O2 = N(6)-methyl-L-lysyl(27)-[histone H3] + 2 formaldehyde + 2 succinate + 2 CO2. Functionally, histone demethylase that specifically demethylates 'Lys-27' of histone H3, thereby playing a central role in histone code. Demethylates trimethylated and dimethylated H3 'Lys-27'. Plays a central role in regulation of posterior development, by regulating HOX gene expression. Involved in inflammatory response by participating in macrophage differentiation in case of inflammation by regulating gene expression and macrophage differentiation. Plays a demethylase-independent role in chromatin remodeling to regulate T-box family member-dependent gene expression by acting as a link between T-box factors and the SMARCA4-containing SWI/SNF remodeling complex. The protein is Lysine-specific demethylase 6B (KDM6B) of Homo sapiens (Human).